Consider the following 828-residue polypeptide: Periplasmic nitrate reductase (828 aa).

A signal peptide (tat-type signal) is located at residues 1 to 31 (MKLSRRSFMKANAVAAAAAAAGLSVPGVARA). One can recognise a 4Fe-4S Mo/W bis-MGD-type domain in the interval 39–95 (IKWDKAPCRFCGTGCGVLVGTQQGRVVACQGDPDAPVNRGLNCIKGYFLPKIMYGKD). Residues Cys46, Cys49, Cys53, and Cys81 each coordinate [4Fe-4S] cluster. Mo-bis(molybdopterin guanine dinucleotide)-binding positions include Lys83, Gln150, Asn175, Cys179, 212 to 219 (WGANMAEM), 243 to 247 (STYQH), 262 to 264 (QSD), Met372, Gln376, Asn482, 508 to 509 (SD), Lys531, Asp558, and 718 to 727 (TGRVLEHWHT). Position 794 (Phe794) interacts with substrate. Mo-bis(molybdopterin guanine dinucleotide) contacts are provided by Asn802 and Lys819.

The protein belongs to the prokaryotic molybdopterin-containing oxidoreductase family. NasA/NapA/NarB subfamily. Component of the periplasmic nitrate reductase NapAB complex composed of NapA and NapB. The cofactor is [4Fe-4S] cluster. It depends on Mo-bis(molybdopterin guanine dinucleotide) as a cofactor. Post-translationally, predicted to be exported by the Tat system. The position of the signal peptide cleavage has not been experimentally proven.

It localises to the periplasm. The enzyme catalyses 2 Fe(II)-[cytochrome] + nitrate + 2 H(+) = 2 Fe(III)-[cytochrome] + nitrite + H2O. Its function is as follows. Catalytic subunit of the periplasmic nitrate reductase complex NapAB. Receives electrons from NapB and catalyzes the reduction of nitrate to nitrite. In Escherichia coli O7:K1 (strain IAI39 / ExPEC), this protein is Periplasmic nitrate reductase.